An 84-amino-acid chain; its full sequence is UPF0473 protein CLD_2004 (84 aa).

This sequence belongs to the UPF0473 family.

This is UPF0473 protein CLD_2004 from Clostridium botulinum (strain Okra / Type B1).